The primary structure comprises 320 residues: Acetyl-coenzyme A carboxylase carboxyl transferase subunit alpha (320 aa).

The region spanning I42–D295 is the CoA carboxyltransferase C-terminal domain.

The protein belongs to the AccA family. In terms of assembly, acetyl-CoA carboxylase is a heterohexamer composed of biotin carboxyl carrier protein (AccB), biotin carboxylase (AccC) and two subunits each of ACCase subunit alpha (AccA) and ACCase subunit beta (AccD).

The protein resides in the cytoplasm. The catalysed reaction is N(6)-carboxybiotinyl-L-lysyl-[protein] + acetyl-CoA = N(6)-biotinyl-L-lysyl-[protein] + malonyl-CoA. It participates in lipid metabolism; malonyl-CoA biosynthesis; malonyl-CoA from acetyl-CoA: step 1/1. Component of the acetyl coenzyme A carboxylase (ACC) complex. First, biotin carboxylase catalyzes the carboxylation of biotin on its carrier protein (BCCP) and then the CO(2) group is transferred by the carboxyltransferase to acetyl-CoA to form malonyl-CoA. The polypeptide is Acetyl-coenzyme A carboxylase carboxyl transferase subunit alpha (Nitrobacter hamburgensis (strain DSM 10229 / NCIMB 13809 / X14)).